A 186-amino-acid polypeptide reads, in one-letter code: Putative manganese efflux pump MntP (186 aa).

A run of 6 helical transmembrane segments spans residues 3–23 (PIALLLLAFAMSTDAFAAAIG), 39–59 (IGIIFGSIEAITPLVGWLIGK), 65–85 (VEAWDHWIAFSLLTVLGLHMI), 109–129 (CLTAFSTSIDAMAVGVSLAFI), 133–153 (IWIASALIGLATTLMVTIGIM), and 166–186 (AEIFGGLTLIAVGAWILYGQL).

This sequence belongs to the MntP (TC 9.B.29) family.

It is found in the cell inner membrane. Probably functions as a manganese efflux pump. This Alcanivorax borkumensis (strain ATCC 700651 / DSM 11573 / NCIMB 13689 / SK2) protein is Putative manganese efflux pump MntP.